A 317-amino-acid chain; its full sequence is tRNA pseudouridine synthase B (317 aa).

Asp-47 (nucleophile) is an active-site residue.

It belongs to the pseudouridine synthase TruB family. Type 1 subfamily.

The catalysed reaction is uridine(55) in tRNA = pseudouridine(55) in tRNA. Responsible for synthesis of pseudouridine from uracil-55 in the psi GC loop of transfer RNAs. This Shewanella denitrificans (strain OS217 / ATCC BAA-1090 / DSM 15013) protein is tRNA pseudouridine synthase B.